A 692-amino-acid chain; its full sequence is Protein adenylyltransferase SelO-1, mitochondrial (692 aa).

Residues 1–24 constitute a mitochondrion transit peptide; that stretch reads MASVGSRLTRFYISRPGVIARRFL. The ATP site is built by Gly142, Gly144, Lys176, Asp188, Gly189, Arg246, and Arg253. Asp337 functions as the Proton acceptor in the catalytic mechanism. Asn338 and Asp347 together coordinate Mg(2+). Asp347 is a binding site for ATP. Residues 637-676 form a disordered region; it reads LEQPGWMGRGGAAIPGERDETEEEGSNSSGAGARGLVPYD. Residue Sec690 is a non-standard amino acid, selenocysteine.

It belongs to the SELO family. It depends on Mg(2+) as a cofactor.

It localises to the mitochondrion. It carries out the reaction L-tyrosyl-[protein] + ATP = O-(5'-adenylyl)-L-tyrosyl-[protein] + diphosphate. The enzyme catalyses L-threonyl-[protein] + ATP = 3-O-(5'-adenylyl)-L-threonyl-[protein] + diphosphate. The catalysed reaction is L-seryl-[protein] + ATP = 3-O-(5'-adenylyl)-L-seryl-[protein] + diphosphate. Functionally, catalyzes the transfer of adenosine 5'-monophosphate (AMP) to Ser, Thr and Tyr residues of target proteins (AMPylation). May be a redox-active mitochondrial selenoprotein which interacts with a redox target protein. The sequence is that of Protein adenylyltransferase SelO-1, mitochondrial from Danio rerio (Zebrafish).